We begin with the raw amino-acid sequence, 1514 residues long: ABC transporter C family member 3 (1514 aa).

A run of 10 helical transmembrane segments spans residues 35–55, 83–103, 116–136, 153–173, 183–203, 325–345, 364–386, 439–459, 463–483, and 551–571; these read PLFLRWLSGFLHSVLLLVLFF, ALFCSLALSLLNLVLMSLSGF, LVSSLGFLLGMVSWGVLSICL, LWLVFYLVVSCYSLVVDFVMY, LLVFDIVAFIAAVFLGYVAVL, ILVTAFFAFIYTVASYVGPAL, YVLVITFFAAKIVECLSQRHWFF, WYMHDPWMVLLQVGLALWILY, GLASIAALVATIIVMLINFPF, and FVFWGAPTLVSVSTFGACILL. Residues 325–606 enclose the ABC transmembrane type-1 1 domain; it reads ILVTAFFAFI…LPDTISMIVQ (282 aa). The ABC transporter 1 domain occupies 640-863; it reads VEVINSTLSW…GTDFMELIGA (224 aa). Position 675 to 682 (675 to 682) interacts with ATP; the sequence is GTVGSGKS. The next 5 membrane-spanning stretches (helical) occupy residues 940-960, 987-1007, 1077-1097, 1181-1201, and 1205-1225; these read YITLAYGGALVPFILLGQVLF, LSTLMIVYVALAFGSSLCILL, IGIIGVMSQVSWLVFLVFIPV, LSSLTFVFSLVFLVSIPTGVI, and LAGLAVTYGLSLNTLQAWLIW. The ABC transmembrane type-1 2 domain maps to 950–1232; it reads VPFILLGQVL…LIWTLCNLEN (283 aa). Residues 1271 to 1503 form the ABC transporter 2 domain; sequence IRDLQVRYAP…KSSSFSKLVA (233 aa). 1303–1310 contributes to the ATP binding site; that stretch reads GRTGSGKS.

This sequence belongs to the ABC transporter superfamily. ABCC family. Conjugate transporter (TC 3.A.1.208) subfamily. As to expression, ubiquitous.

It localises to the membrane. The catalysed reaction is ATP + H2O + xenobioticSide 1 = ADP + phosphate + xenobioticSide 2.. With respect to regulation, glutathione-conjugate transport is inhibited by decyl-glutathione and, to a lower extent, by GS-GS, but not by GSH. All transports are inhibited by vanadate. In terms of biological role, pump for glutathione S-conjugates. Mediates the transport of glutathione conjugates such as chlorodinitrobenzene-GS (DNB-GS), and of chlorophyll catabolites such as Bn-NCC-1. Also transports heavy metals such as cadmium (Cd). The protein is ABC transporter C family member 3 (ABCC3) of Arabidopsis thaliana (Mouse-ear cress).